Here is a 257-residue protein sequence, read N- to C-terminus: Transcription factor MYB3 (257 aa).

HTH myb-type domains follow at residues 9–61 (KAHM…MNYL) and 62–116 (RPDL…KRKL). 2 DNA-binding regions (H-T-H motif) span residues 37–61 (WRSL…MNYL) and 89–112 (WSLI…NTHI). A Required for interaction with CPL1 motif is present at residues 189 to 193 (LNLEL).

Interacts with CPL1. Expressed in roots, stems, leaves, flowers and siliques.

It localises to the nucleus. This is Transcription factor MYB3 (MYB3) from Arabidopsis thaliana (Mouse-ear cress).